Here is a 426-residue protein sequence, read N- to C-terminus: D-tagatose-1,6-bisphosphate aldolase subunit KbaZ (426 aa).

This sequence belongs to the GatZ/KbaZ family. KbaZ subfamily. As to quaternary structure, forms a complex with KbaY.

It functions in the pathway carbohydrate metabolism; D-tagatose 6-phosphate degradation; D-glyceraldehyde 3-phosphate and glycerone phosphate from D-tagatose 6-phosphate: step 2/2. Component of the tagatose-1,6-bisphosphate aldolase KbaYZ that is required for full activity and stability of the Y subunit. Could have a chaperone-like function for the proper and stable folding of KbaY. When expressed alone, KbaZ does not show any aldolase activity. The chain is D-tagatose-1,6-bisphosphate aldolase subunit KbaZ from Escherichia coli O17:K52:H18 (strain UMN026 / ExPEC).